The primary structure comprises 877 residues: Alanine--tRNA ligase (877 aa).

Residues His-566, His-570, Cys-668, and His-672 each coordinate Zn(2+).

The protein belongs to the class-II aminoacyl-tRNA synthetase family. Zn(2+) serves as cofactor.

The protein localises to the cytoplasm. The catalysed reaction is tRNA(Ala) + L-alanine + ATP = L-alanyl-tRNA(Ala) + AMP + diphosphate. Functionally, catalyzes the attachment of alanine to tRNA(Ala) in a two-step reaction: alanine is first activated by ATP to form Ala-AMP and then transferred to the acceptor end of tRNA(Ala). Also edits incorrectly charged Ser-tRNA(Ala) and Gly-tRNA(Ala) via its editing domain. The sequence is that of Alanine--tRNA ligase from Staphylococcus aureus (strain USA300 / TCH1516).